The sequence spans 935 residues: C-1-tetrahydrofolate synthase, cytoplasmic (935 aa).

Position 1 is an N-acetylmethionine (M1). The methylenetetrahydrofolate dehydrogenase and methenyltetrahydrofolate cyclohydrolase (D/C) domain stretch occupies residues 2–291 (APAEILNGRE…MLMQSTVESA (290 aa)). Substrate-binding positions include 52-56 (YINVK) and 99-101 (VQL). K56 is an active-site residue. Residues 172 to 174 (GRS) and S197 contribute to the NADP(+) site. 272 to 276 (PGGVG) serves as a coordination point for substrate. The interval 310 to 935 (LNLKTPDPSD…PETQQVNGLF (626 aa)) is formyltetrahydrofolate synthetase domain. At S318 the chain carries Phosphoserine. 380-387 (TPLGEGKS) contacts ATP. Phosphoserine occurs at positions 413 and 490.

In the N-terminal section; belongs to the tetrahydrofolate dehydrogenase/cyclohydrolase family. It in the C-terminal section; belongs to the formate--tetrahydrofolate ligase family. Homodimer.

The protein resides in the cytoplasm. The enzyme catalyses (6R)-5,10-methylene-5,6,7,8-tetrahydrofolate + NADP(+) = (6R)-5,10-methenyltetrahydrofolate + NADPH. It catalyses the reaction (6R)-5,10-methenyltetrahydrofolate + H2O = (6R)-10-formyltetrahydrofolate + H(+). It carries out the reaction (6S)-5,6,7,8-tetrahydrofolate + formate + ATP = (6R)-10-formyltetrahydrofolate + ADP + phosphate. Its pathway is one-carbon metabolism; tetrahydrofolate interconversion. In terms of biological role, trifunctional enzyme that catalyzes the interconversion of three forms of one-carbon-substituted tetrahydrofolate: (6R)-5,10-methylene-5,6,7,8-tetrahydrofolate, 5,10-methenyltetrahydrofolate and (6S)-10-formyltetrahydrofolate. These derivatives of tetrahydrofolate are differentially required in nucleotide and amino acid biosynthesis, (6S)-10-formyltetrahydrofolate being required for purine biosynthesis while (6R)-5,10-methylene-5,6,7,8-tetrahydrofolate is used for serine and methionine biosynthesis for instance. The polypeptide is C-1-tetrahydrofolate synthase, cytoplasmic (MTHFD1) (Pongo abelii (Sumatran orangutan)).